The sequence spans 439 residues: C4-dicarboxylate transport protein (439 aa).

9 helical membrane passes run histidine 9–proline 29, methionine 45–methionine 65, leucine 80–isoleucine 100, glycine 150–glycine 170, alanine 186–methionine 206, leucine 221–glycine 241, valine 291–leucine 311, isoleucine 334–valine 354, and alanine 357–isoleucine 377.

The protein belongs to the dicarboxylate/amino acid:cation symporter (DAACS) (TC 2.A.23) family.

Its subcellular location is the cell inner membrane. In terms of biological role, responsible for the transport of dicarboxylates such as succinate, fumarate, and malate from the periplasm across the membrane. This is C4-dicarboxylate transport protein from Geobacter sp. (strain M21).